A 101-amino-acid polypeptide reads, in one-letter code: Small ribosomal subunit protein uS14 (101 aa).

Belongs to the universal ribosomal protein uS14 family. In terms of assembly, part of the 30S ribosomal subunit. Contacts proteins S3 and S10.

Functionally, binds 16S rRNA, required for the assembly of 30S particles and may also be responsible for determining the conformation of the 16S rRNA at the A site. This chain is Small ribosomal subunit protein uS14, found in Ectopseudomonas mendocina (strain ymp) (Pseudomonas mendocina).